Consider the following 410-residue polypeptide: E3 SUMO-protein ligase EGR2 (410 aa).

Low complexity predominate over residues 68-83 (PPASTTASSSVTSASP). Disordered stretches follow at residues 68–95 (PPAS…GVCT), 101–120 (PELD…SGCT), and 127–151 (PSAF…SYPS). Residues 104-107 (DHLY) carry the HCFC1-binding-motif (HBM) motif. Positions 127–143 (PSAFLSPPTTSTSSLAY) are enriched in low complexity. An N6-acetyllysine modification is found at Lys188. The interval 217 to 286 (PSAGVTGPGA…PYPCPAEGCD (70 aa)) is disordered. Over residues 222–231 (TGPGASGGSE) the composition is skewed to gly residues. Residues 237–248 (GSGSAAVTTSPY) are compositionally biased toward polar residues. 3 consecutive C2H2-type zinc fingers follow at residues 278 to 302 (YPCP…IRIH), 308 to 330 (FQCR…IRTH), and 336 to 358 (FACD…TKIH). The interval 349–410 (DERKRHTKIH…LACTSRTRTP (62 aa)) is disordered. The span at 353-363 (RHTKIHLRQKE) shows a compositional bias: basic residues. The span at 367–380 (SAPSSSASAQPSAS) shows a compositional bias: low complexity.

This sequence belongs to the EGR C2H2-type zinc-finger protein family. As to quaternary structure, interacts with HCFC1. Interacts with WWP2. Interacts with UBC9. Interacts with CITED1. Interacts (via phosphorylated form) with SFN. Post-translationally, ubiquitinated by WWP2 leading to proteasomal degradation. Acetylated. May be deacetylated by HDAC6, HDAC10 or SIRT1.

Its subcellular location is the nucleus. It participates in protein modification; protein sumoylation. Sequence-specific DNA-binding transcription factor. Plays a role in hindbrain segmentation by regulating the expression of a subset of homeobox containing genes and in Schwann cell myelination by regulating the expression of genes involved in the formation and maintenance of myelin. Binds to two EGR2-consensus sites EGR2A (5'-CTGTAGGAG-3') and EGR2B (5'-ATGTAGGTG-3') in the HOXB3 enhancer and promotes HOXB3 transcriptional activation. Binds to specific DNA sites located in the promoter region of HOXA4, HOXB2 and ERBB2. Regulates hindbrain segmentation by controlling the expression of Hox genes, such as HOXA4, HOXB3 and HOXB2, and thereby specifying odd and even rhombomeres. Promotes the expression of HOXB3 in the rhombomere r5 in the hindbrain. Regulates myelination in the peripheral nervous system after birth, possibly by regulating the expression of myelin proteins, such as MPZ, and by promoting the differentiation of Schwann cells. Involved in the development of the jaw openener musculature, probably by playing a role in its innervation through trigeminal motor neurons. May play a role in adipogenesis, possibly by regulating the expression of CEBPB. Its function is as follows. E3 SUMO-protein ligase helping SUMO1 conjugation to its coregulators NAB1 and NAB2, whose sumoylation down-regulates EGR2 transcriptional activity. This is E3 SUMO-protein ligase EGR2 (EGR2) from Cricetulus griseus (Chinese hamster).